Here is a 377-residue protein sequence, read N- to C-terminus: Unsaturated 3S-rhamnoglycuronyl hydrolase (377 aa).

Residues 1 to 25 (MKNQALKILTLCVLVGSAMSLKLYA) form the signal peptide. Asp-161 serves as the catalytic Proton donor.

This sequence belongs to the glycosyl hydrolase 105 family.

Its subcellular location is the periplasm. Functionally, unsaturated beta-glucuronyl hydrolase involved in ulvan degradation. Ulvan is the main polysaccharide component of the Ulvales (green seaweed) cell wall. It is composed of disaccharide building blocks comprising 3-sulfated rhamnose (Rha3S) linked to D-glucuronic acid (GlcA), L-iduronic acid (IduA), or D-xylose (Xyl). Unsaturated 3S-rhamnoglycuronyl hydrolase works together with ulvan lyases to fully degrade the ulvan polymer, catalyzing specifically the cleavage of the unsaturated 4-deoxy-L-threo-hex-4-enopyranosiduronic acid (deltaUA) of deltaUA-Rha3S disaccharides and deltaUA-Rha3S-Xyl-Rha3S tetrasaccharides, the end products of the ulvan lyase reaction. Also hydrolases deltaUA-Rha3S-IduA-Rha3S and deltaUA-Rha3S-GlcA-Rha3S tetrasaccharidestetrasaccharides. Prefers tetrasaccharides over disaccharides and prefers an uronic residue at subsite +2. The polypeptide is Unsaturated 3S-rhamnoglycuronyl hydrolase (Formosa agariphila (strain DSM 15362 / KCTC 12365 / LMG 23005 / KMM 3901 / M-2Alg 35-1)).